A 210-amino-acid polypeptide reads, in one-letter code: Troponin I, cardiac muscle (210 aa).

The interval 1–43 is disordered; sequence MADGSSDAAREPRPAPAPIRRRSSNYRAYATEPHAKKKSKISA. The residue at position 2 (alanine 2) is an N-acetylalanine. Phosphoserine occurs at positions 5 and 6. 2 positions are modified to phosphoserine; by PKA and PKD/PRKD1: serine 23 and serine 24. Tyrosine 26 is subject to Phosphotyrosine. Threonine 31 is modified (phosphothreonine; by STK4/MST1). Residues 32–79 are involved in binding TNC; it reads EPHAKKKSKISASRKLQLKTLLLQIAKQELEREAEERRGEKGRALSTR. Phosphoserine; by PKC/PRKCE occurs at positions 42 and 44. At threonine 51 the chain carries Phosphothreonine; by STK4/MST1. The residue at position 77 (serine 77) is a Phosphoserine. The residue at position 78 (threonine 78) is a Phosphothreonine. Phosphothreonine; by STK4/MST1 occurs at positions 129 and 143. Residues 129–149 form an involved in binding TNC and actin region; that stretch reads TQKIFDLRGKFKRPTLRRVRI. The residue at position 150 (serine 150) is a Phosphoserine; by PAK3. Serine 166 carries the phosphoserine modification. Position 181 is a phosphothreonine (threonine 181). Phosphoserine is present on serine 199.

Belongs to the troponin I family. In terms of assembly, binds to actin and tropomyosin. Interacts with TRIM63. Interacts with STK4/MST1. Phosphorylated at Ser-42 and Ser-44 by PRKCE; phosphorylation increases myocardium contractile dysfunction. Phosphorylated at Ser-23 and Ser-24 by PRKD1; phosphorylation reduces myofilament calcium sensitivity. Phosphorylated preferentially at Thr-31. Phosphorylation by STK4/MST1 alters its binding affinity to TNNC1 (cardiac Tn-C) and TNNT2 (cardiac Tn-T).

Its function is as follows. Troponin I is the inhibitory subunit of troponin, the thin filament regulatory complex which confers calcium-sensitivity to striated muscle actomyosin ATPase activity. The protein is Troponin I, cardiac muscle (TNNI3) of Homo sapiens (Human).